Reading from the N-terminus, the 83-residue chain is Translation initiation factor IF-1 (83 aa).

Residues 1–72 (MAKEESIEMQ…TRGRIVYREA (72 aa)) form the S1-like domain.

This sequence belongs to the IF-1 family. Component of the 30S ribosomal translation pre-initiation complex which assembles on the 30S ribosome in the order IF-2 and IF-3, IF-1 and N-formylmethionyl-tRNA(fMet); mRNA recruitment can occur at any time during PIC assembly.

Its subcellular location is the cytoplasm. Its function is as follows. One of the essential components for the initiation of protein synthesis. Stabilizes the binding of IF-2 and IF-3 on the 30S subunit to which N-formylmethionyl-tRNA(fMet) subsequently binds. Helps modulate mRNA selection, yielding the 30S pre-initiation complex (PIC). Upon addition of the 50S ribosomal subunit IF-1, IF-2 and IF-3 are released leaving the mature 70S translation initiation complex. This is Translation initiation factor IF-1 from Coxiella burnetii (strain Dugway 5J108-111).